The primary structure comprises 597 residues: DDB1- and CUL4-associated factor 8 (597 aa).

The span at 1-24 (MSSKGSSTDGRTDLANGSLSSSPE) shows a compositional bias: polar residues. Residues 1 to 147 (MSSKGSSTDG…DWVSSETSAL (147 aa)) are disordered. Phosphoserine occurs at positions 21 and 22. The Nuclear export signal signature appears at 39 to 50 (IEVEASDLSLSL). The span at 65-99 (RGTDTESSGEDKDSDSMEDTGHYSINDENRVHDRS) shows a compositional bias: basic and acidic residues. A Phosphoserine modification is found at Ser99. A compositionally biased stretch (acidic residues) spans 100–112 (EEEEEEEEEEEEE). The Nuclear localization signal motif lies at 114 to 122 (PRRRVQRKR). The segment covering 124–137 (NRDQDSSDDERALE) has biased composition (basic and acidic residues). Residues Ser129 and Ser130 each carry the phosphoserine modification. 7 WD repeats span residues 191–230 (GHTGCVNTLHFNQRGTWLASGSDDLKVVVWDWVRRQPVLD), 234–275 (GHKS…CCKN), 281–321 (QHKG…PASK), 329–369 (EKKV…ENEN), 385–424 (ESKANITCLVYSHDGTELLASYNDEDIYLFNSSHSDGAQY), 432–472 (RNNA…IIQF), and 476–515 (DKGGVVNCLEPHPHLPVLATSGLDHDVKIWAPTAEASTEL). Arg204 carries the omega-N-methylarginine; by PRMT1 modification. The interval 558–597 (HRRWREPGVGATDADSDESPSSSDTSDEEEGPDRVQCMPS) is disordered.

It belongs to the WD repeat DCAF8 family. As to quaternary structure, interacts with DDB1, CUL4A and CUL4B. Interacts with KPNA1, KPNB1 and XPO1.

It localises to the nucleus. It is found in the cytoplasm. It functions in the pathway protein modification; protein ubiquitination. Functionally, may function as a substrate receptor for CUL4-DDB1 E3 ubiquitin-protein ligase complex. The chain is DDB1- and CUL4-associated factor 8 (DCAF8) from Homo sapiens (Human).